Consider the following 302-residue polypeptide: tRNA dimethylallyltransferase (302 aa).

10-17 (GPTAIGKT) provides a ligand contact to ATP. 12–17 (TAIGKT) lines the substrate pocket. The segment at 35–38 (DSRQ) is interaction with substrate tRNA.

This sequence belongs to the IPP transferase family. Monomer. Mg(2+) serves as cofactor.

The catalysed reaction is adenosine(37) in tRNA + dimethylallyl diphosphate = N(6)-dimethylallyladenosine(37) in tRNA + diphosphate. Catalyzes the transfer of a dimethylallyl group onto the adenine at position 37 in tRNAs that read codons beginning with uridine, leading to the formation of N6-(dimethylallyl)adenosine (i(6)A). The protein is tRNA dimethylallyltransferase of Christiangramia forsetii (strain DSM 17595 / CGMCC 1.15422 / KT0803) (Gramella forsetii).